A 440-amino-acid chain; its full sequence is MESQQLSNYPHISHGSACASVTSKEVHTNQDPLDVSASKIQEYDKASTKANSQQTTTPASSAVPENPHHASPQPASVPPPQNGPYPQQCMMTQNQANPSGWSFYGHPSMIPYTPYQMSPMYFPPGPQSQFPQYPSSVGTPLSTPSPESGNTFTDSSSADSDMTSTKKYVRPPPMLTSPNDFPNWVKTYIKFLQNSNLGGIIPTVNGKPVRQITDDELTFLYNTFQIFAPSQFLPTWVKDILSVDYTDIMKILSKSIEKMQSDTQEANDIVTLANLQYNGSTPADAFETKVTNIIDRLNNNGIHINNKVACQLIMRGLSGEYKFLRYTRHRHLNMTVAELFLDIHAIYEEQQGSRNSKPNYRRNPSDEKNDSRSYTNTTKPKVIARNPQKTNNSKSKTARAHNVSTSNNSPSTDNDSISKSTTEPIQLNNKHDLHLRPETY.

Polar residues-rich tracts occupy residues 1-10 (MESQQLSNYP), 48-60 (TKANSQQTTTPAS), and 127-152 (QSQFPQYPSSVGTPLSTPSPESGNTF). Disordered stretches follow at residues 1–93 (MESQ…MMTQ), 126–173 (PQSQ…RPPP), and 352–440 (GSRN…PETY). A compositionally biased stretch (low complexity) spans 153-165 (TDSSSADSDMTST). The segment at 299-401 (NNGIHINNKV…NSKSKTARAH (103 aa)) is RNA-binding. A compositionally biased stretch (low complexity) spans 402–418 (NVSTSNNSPSTDNDSIS). The residue at position 416 (Ser416) is a Phosphoserine. Positions 419 to 428 (KSTTEPIQLN) are enriched in polar residues. Residues 429–440 (NKHDLHLRPETY) are compositionally biased toward basic and acidic residues.

In terms of assembly, homotrimer.

The protein resides in the cytoplasm. Capsid protein (CA) is the structural component of the virus-like particle (VLP), forming the shell that encapsulates the retrotransposons dimeric RNA genome. The particles are assembled from trimer-clustered units and there are holes in the capsid shells that allow for the diffusion of macromolecules. CA also has nucleocapsid-like chaperone activity, promoting primer tRNA(i)-Met annealing to the multipartite primer-binding site (PBS), dimerization of Ty1 RNA and initiation of reverse transcription. In Saccharomyces cerevisiae (strain ATCC 204508 / S288c) (Baker's yeast), this protein is Transposon Ty1-ER2 Gag polyprotein (TY1A-ER2).